The following is a 72-amino-acid chain: Translation initiation factor IF-1 (72 aa).

The region spanning 1–72 (MIKEDNIEMH…SKGRIIFRSR (72 aa)) is the S1-like domain.

This sequence belongs to the IF-1 family. In terms of assembly, component of the 30S ribosomal translation pre-initiation complex which assembles on the 30S ribosome in the order IF-2 and IF-3, IF-1 and N-formylmethionyl-tRNA(fMet); mRNA recruitment can occur at any time during PIC assembly.

It is found in the cytoplasm. One of the essential components for the initiation of protein synthesis. Stabilizes the binding of IF-2 and IF-3 on the 30S subunit to which N-formylmethionyl-tRNA(fMet) subsequently binds. Helps modulate mRNA selection, yielding the 30S pre-initiation complex (PIC). Upon addition of the 50S ribosomal subunit IF-1, IF-2 and IF-3 are released leaving the mature 70S translation initiation complex. This chain is Translation initiation factor IF-1, found in Blochmanniella floridana.